A 982-amino-acid polypeptide reads, in one-letter code: E3 ubiquitin-protein ligase CBL-B (982 aa).

The 4H stretch occupies residues 35–167; the sequence is PPKQAAADRR…KAIFPNGQFQ (133 aa). One can recognise a Cbl-PTB domain in the interval 35-343; it reads PPKQAAADRR…GRSYNPDLTG (309 aa). The segment at 168 to 240 is EF-hand-like; it reads GDNFRITKAD…FEFDIFTRLF (73 aa). Asp221, Thr223, Asn225, Tyr227, and Glu232 together coordinate Ca(2+). The segment at 241-343 is SH2-like; sequence QPWGSILRNW…GRSYNPDLTG (103 aa). Ser282 is modified (phosphoserine; by PKC/PRKCQ). Residue Arg286 participates in 4-O-phospho-L-tyrosine binding. The interval 344-372 is linker; it reads LCEPTPHDHIKVTQEQYELYCEMGSTFQL. At Tyr363 the chain carries Phosphotyrosine. An RING-type zinc finger spans residues 373–412; that stretch reads CKICAENDKDVKIEPCGHLMCTSCLTAWQESDGQGCPFCR. Residues 466–571 are disordered; sequence NVRKCTDRQN…PPPIPPDNRL (106 aa). The span at 473–486 shows a compositional bias: polar residues; the sequence is RQNSPVTSPGSSPL. Ser476, Ser480, Ser484, Ser521, Ser525, and Ser529 each carry phosphoserine. The interaction with VAV1 stretch occupies residues 543 to 568; sequence PLPAPPPPLRDPPPPPPERPPPIPPD. Pro residues predominate over residues 544–567; it reads LPAPPPPLRDPPPPPPERPPPIPP. Ser634 carries the phosphoserine modification. Phosphotyrosine is present on residues Tyr665 and Tyr709. Disordered regions lie at residues 688-731 and 769-929; these read GPLA…NVKP and FDSA…EAAL. Residues 715–725 are compositionally biased toward polar residues; sequence HPVSLNSQPSH. The span at 819-828 shows a compositional bias: pro residues; that stretch reads PSLPPPPPPA. Over residues 838 to 848 the composition is skewed to low complexity; that stretch reads PPGSSSRPSSG. Polar residues predominate over residues 880–899; sequence VKTNRTSQDYDQLPSCSDGS. Position 889 is a phosphotyrosine (Tyr889). The interaction with SH3KBP1 stretch occupies residues 891–927; it reads QLPSCSDGSQAPARPPKPRPRRTAPEIHHRKPHGPEA. A compositionally biased stretch (basic residues) spans 906 to 922; it reads PKPRPRRTAPEIHHRKP. Positions 931-970 constitute a UBA domain; the sequence is NVDAKIAKLMGEGYAFEEVKRALEIAQNNVEVARSILREF.

In terms of assembly, interacts with SH3 domain-containing proteins LCK, CRK and SORBS1. Interacts with LCP2 and ZAP70. Interacts with CBL. Interacts with SH3 domain-containing proteins VAV1, FYN, FGR, PLCG1, GRB2, CRKL, PIK3R1 and SH3KBP1/CIN85. Identified in heterotrimeric complexes with SH3KBP1/CIN85, CD2AP and ARHGEF7, where one CBLB peptide binds two copies of the other protein. Interacts with poly-ubiquitinated proteins. Dimerization is required for the binding of poly-ubiquitin, but not for the binding of mono-ubiquitin. Interacts with EGFR (phosphorylated). Interacts with IFT20. Phosphorylated on tyrosine and serine residues upon TCR or BCR activation, and upon various types of cell stimulation. Post-translationally, auto-ubiquitinated upon EGF-mediated cell activation or upon T-cell costimulation by CD28; which promotes proteasomal degradation. As to expression, expressed in placenta, heart, lung, kidney, spleen, ovary and testis, as well as fetal brain and liver and hematopoietic cell lines, but not in adult brain, liver, pancreas, salivary gland, or skeletal muscle. Present in lymphocytes (at protein level).

The protein resides in the cytoplasm. It carries out the reaction S-ubiquitinyl-[E2 ubiquitin-conjugating enzyme]-L-cysteine + [acceptor protein]-L-lysine = [E2 ubiquitin-conjugating enzyme]-L-cysteine + N(6)-ubiquitinyl-[acceptor protein]-L-lysine.. It participates in protein modification; protein ubiquitination. Its function is as follows. E3 ubiquitin-protein ligase which accepts ubiquitin from specific E2 ubiquitin-conjugating enzymes, and transfers it to substrates, generally promoting their degradation by the proteasome. Negatively regulates TCR (T-cell receptor), BCR (B-cell receptor) and FCER1 (high affinity immunoglobulin epsilon receptor) signal transduction pathways. In naive T-cells, inhibits VAV1 activation upon TCR engagement and imposes a requirement for CD28 costimulation for proliferation and IL-2 production. Also acts by promoting PIK3R1/p85 ubiquitination, which impairs its recruitment to the TCR and subsequent activation. In activated T-cells, inhibits PLCG1 activation and calcium mobilization upon restimulation and promotes anergy. In B-cells, acts by ubiquitinating SYK and promoting its proteasomal degradation. Slightly promotes SRC ubiquitination. May be involved in EGFR ubiquitination and internalization. May be functionally coupled with the E2 ubiquitin-protein ligase UB2D3. In association with CBL, required for proper feedback inhibition of ciliary platelet-derived growth factor receptor-alpha (PDGFRA) signaling pathway via ubiquitination and internalization of PDGFRA. In Homo sapiens (Human), this protein is E3 ubiquitin-protein ligase CBL-B (CBLB).